Here is a 723-residue protein sequence, read N- to C-terminus: Translation initiation factor IF-2 (723 aa).

Residues 112 to 138 are disordered; it reads KIFNNKKNKKQKPQQAPQQEVQKKKEK. Residues 114 to 123 show a composition bias toward basic residues; it reads FNNKKNKKQK. In terms of domain architecture, tr-type G spans 224–393; that stretch reads ERPPVVTIMG…LLVSEMEELK (170 aa). Residues 233–240 form a G1 region; it reads GHVDHGKT. 233 to 240 contributes to the GTP binding site; that stretch reads GHVDHGKT. The segment at 258–262 is G2; that stretch reads GITQH. Positions 279 to 282 are G3; it reads DTPG. GTP-binding positions include 279 to 283 and 333 to 336; these read DTPGH and NKID. Residues 333–336 are G4; that stretch reads NKID. The segment at 369–371 is G5; that stretch reads SAL.

This sequence belongs to the TRAFAC class translation factor GTPase superfamily. Classic translation factor GTPase family. IF-2 subfamily.

The protein resides in the cytoplasm. In terms of biological role, one of the essential components for the initiation of protein synthesis. Protects formylmethionyl-tRNA from spontaneous hydrolysis and promotes its binding to the 30S ribosomal subunits. Also involved in the hydrolysis of GTP during the formation of the 70S ribosomal complex. This is Translation initiation factor IF-2 from Anoxybacillus flavithermus (strain DSM 21510 / WK1).